A 295-amino-acid chain; its full sequence is GTPase Era (295 aa).

Residues 7–176 (KTVSVCIIGR…ITSKAKIAPW (170 aa)) enclose the Era-type G domain. The segment at 15-22 (GRPNSGKS) is G1. 15–22 (GRPNSGKS) serves as a coordination point for GTP. Residues 41–45 (QTTRS) form a G2 region. Residues 62–65 (DTPG) form a G3 region. GTP is bound by residues 62-66 (DTPGI) and 124-127 (NKIE). The interval 124-127 (NKIE) is G4. The tract at residues 152 to 154 (ISA) is G5. The KH type-2 domain occupies 204-281 (LQQELPYKLT…HLFLFVKVRE (78 aa)).

This sequence belongs to the TRAFAC class TrmE-Era-EngA-EngB-Septin-like GTPase superfamily. Era GTPase family. As to quaternary structure, monomer.

The protein localises to the cytoplasm. Its subcellular location is the cell inner membrane. An essential GTPase that binds both GDP and GTP, with rapid nucleotide exchange. Plays a role in 16S rRNA processing and 30S ribosomal subunit biogenesis and possibly also in cell cycle regulation and energy metabolism. This Rickettsia canadensis (strain McKiel) protein is GTPase Era.